The following is an 884-amino-acid chain: DNA replication licensing factor mcm2 (884 aa).

Over residues 1–16 (MADSSESFNIATSPRT) the composition is skewed to polar residues. 2 disordered regions span residues 1-61 (MADS…IGDA) and 120-151 (LYDSDEEDEDRPARKRRMAERAAEGAPEEDEE). Over residues 47–58 (PREEEEDGEELI) the composition is skewed to acidic residues. The C4-type zinc finger occupies 314–340 (CNKCNFILGPFFQSQNQEVKPGSCPEC). An MCM domain is found at 458–664 (IGERIFASIA…VQDEMLARFV (207 aa)). ADP-binding residues include Ser-515 and Gln-516. The Arginine finger motif lies at 640–643 (SRFD).

The protein belongs to the MCM family. In terms of assembly, component of the mcm2-7 complex (RLF-M). The complex forms a toroidal hexameric ring with the proposed subunit order mcm2-mcm6-mcm4-mcm7-mcm3-mcm5. Component of the replisome complex. Component of the CMG helicase complex, composed of the mcm2-7 complex, the GINS complex and cdc45. May be in a phosphorylated state in the mitotic mcm complex. Phosphorylated in the interphase mcm complex. Phosphorylated by the cdc7-dbf4 and cdc7-dbf4b complexes.

The protein localises to the nucleus. It is found in the chromosome. The enzyme catalyses ATP + H2O = ADP + phosphate + H(+). Functionally, acts as a component of the MCM2-7 complex (MCM complex) which is the replicative helicase essential for 'once per cell cycle' DNA replication initiation and elongation in eukaryotic cells. Core component of CDC45-MCM-GINS (CMG) helicase, the molecular machine that unwinds template DNA during replication, and around which the replisome is built. The active ATPase sites in the MCM2-7 ring are formed through the interaction surfaces of two neighboring subunits such that a critical structure of a conserved arginine finger motif is provided in trans relative to the ATP-binding site of the Walker A box of the adjacent subunit. The six ATPase active sites, however, are likely to contribute differentially to the complex helicase activity. Required for the entry in S phase and for cell division. In Xenopus tropicalis (Western clawed frog), this protein is DNA replication licensing factor mcm2.